The sequence spans 129 residues: Gas vesicle protein C (129 aa).

3 repeats span residues 19-51 (VTQL…LHQF), 52-84 (HQNL…LHKF), and 85-117 (HQNL…LQQF). Residues 19-117 (VTQLFRETHE…KAQSQYLQQF (99 aa)) are 3 X 33 AA tandem repeats.

It belongs to the gas vesicle GvpC family.

It localises to the gas vesicle. In terms of biological role, confers stability, involved in shaping gas vesicles, hollow, gas filled proteinaceous nanostructures. During planktonic growth they allow positioning of the organism at a favorable depth for light or nutrient acquisition. Functionally, cluster expression in E.coli (gvpA1-gvpA2-gvpC-gvpN-gvpJ-gvpK-gvpF-gvpG-gvpV-gvpW) allows cells to float and produces irregularly shaped gas vesicles. This is Gas vesicle protein C from Nostoc sp. (strain PCC 7120 / SAG 25.82 / UTEX 2576).